The primary structure comprises 185 residues: Ribosome-recycling factor (185 aa).

Belongs to the RRF family.

The protein resides in the cytoplasm. Responsible for the release of ribosomes from messenger RNA at the termination of protein biosynthesis. May increase the efficiency of translation by recycling ribosomes from one round of translation to another. The polypeptide is Ribosome-recycling factor (Bacillus pumilus (strain SAFR-032)).